A 77-amino-acid polypeptide reads, in one-letter code: Large ribosomal subunit protein bL28 (77 aa).

The protein belongs to the bacterial ribosomal protein bL28 family.

The sequence is that of Large ribosomal subunit protein bL28 from Dechloromonas aromatica (strain RCB).